The following is a 133-amino-acid chain: Large ribosomal subunit protein eL32y (133 aa).

It belongs to the eukaryotic ribosomal protein eL32 family.

This chain is Large ribosomal subunit protein eL32y (RPL32B), found in Arabidopsis thaliana (Mouse-ear cress).